The following is a 196-amino-acid chain: MKPQVVFVLGGPGAGKGTQCARIVENYSYTHLSAGDLLREERSRTDSEFGQLIDSYIKEGKIVPVQITINLLRKAMEETMKADEKKFRFLIDGFPRNQDNLQGWNTEMDGKADVKFVLFFDCSNEVCIDRCLERGKSSGRTDDNRESLEKRIQTYLQSTRPIIELYEKQGKVQRIDASRSVDEVFADVKNILEKDD.

13–18 (GAGKGT) provides a ligand contact to ATP. The tract at residues 33–63 (SAGDLLREERSRTDSEFGQLIDSYIKEGKIV) is NMP. Residues R39, 61 to 63 (KIV), and 93 to 96 (GFPR) each bind a ribonucleoside 5'-phosphate. CMP is bound at residue N100. An LID region spans residues 133–143 (ERGKSSGRTDD). R134 contacts ATP. Residues R140 and R151 each coordinate a ribonucleoside 5'-phosphate. Position 179 (R179) interacts with ATP.

This sequence belongs to the adenylate kinase family. UMP-CMP kinase subfamily. Monomer. It depends on Mg(2+) as a cofactor.

Its subcellular location is the nucleus. It localises to the cytoplasm. It carries out the reaction CMP + ATP = CDP + ADP. The enzyme catalyses dCMP + ATP = dCDP + ADP. The catalysed reaction is UMP + ATP = UDP + ADP. It catalyses the reaction a 2'-deoxyribonucleoside 5'-diphosphate + ATP = a 2'-deoxyribonucleoside 5'-triphosphate + ADP. It carries out the reaction a ribonucleoside 5'-diphosphate + ATP = a ribonucleoside 5'-triphosphate + ADP. Catalyzes the phosphorylation of pyrimidine nucleoside monophosphates at the expense of ATP. Plays an important role in de novo pyrimidine nucleotide biosynthesis. Has preference for UMP and CMP as phosphate acceptors. Also displays broad nucleoside diphosphate kinase activity. This Danio rerio (Zebrafish) protein is UMP-CMP kinase (cmpk).